A 314-amino-acid chain; its full sequence is Olfactory receptor 2Z1 (314 aa).

Residues 1–25 (MGDVNQSVASDFILVGLFSHSGSRQ) lie on the Extracellular side of the membrane. Asn5 is a glycosylation site (N-linked (GlcNAc...) asparagine). A helical transmembrane segment spans residues 26–49 (LLFSLVAVMFVIGLLGNTVLLFLI). At 50 to 57 (RVDSRLHT) the chain is on the cytoplasmic side. A helical transmembrane segment spans residues 58–79 (PMYFLLSQLSLFDIGCPMVTIP). Residues 80-100 (KMASDFLRGEGATSYGGGAAQ) lie on the Extracellular side of the membrane. Residues 101-120 (IFFLTLMGVAEGVLLVLMSY) traverse the membrane as a helical segment. The Cytoplasmic segment spans residues 121 to 139 (DRYVAVCQPLQYPVLMRRQ). Residues 140-158 (VCLLMMGSSWVVGVLNASI) traverse the membrane as a helical segment. Topologically, residues 159–195 (QTSITLHFPYCASRIVDHFFCEVPALLKLSCADTCAY) are extracellular. The chain crosses the membrane as a helical span at residues 196–219 (EMALSTSGVLILMLPLSLIATSYG). The Cytoplasmic segment spans residues 220–236 (HVLQAVLSMRSEEARHK). The helical transmembrane segment at 237 to 259 (AVTTCSSHITVVGLFYGAAVFMY) threads the bilayer. Topologically, residues 260-272 (MVPCAYHSPQQDN) are extracellular. The helical transmembrane segment at 273 to 292 (VVSLFYSLVTPTLNPLIYSL) threads the bilayer. At 293-314 (RNPEVWMALVKVLSRAGLRQMC) the chain is on the cytoplasmic side.

Belongs to the G-protein coupled receptor 1 family.

Its subcellular location is the cell membrane. Functionally, odorant receptor. The polypeptide is Olfactory receptor 2Z1 (OR2Z1) (Homo sapiens (Human)).